The sequence spans 160 residues: Large ribosomal subunit protein uL15 (160 aa).

Over residues 1-11 the composition is skewed to basic and acidic residues; sequence MKLNELRDNHG. Residues 1-39 form a disordered region; that stretch reads MKLNELRDNHGARPKSKRLGRGIGSGKGKTSGKGVKGQK. Residues 21 to 35 are compositionally biased toward gly residues; it reads RGIGSGKGKTSGKGV.

It belongs to the universal ribosomal protein uL15 family. As to quaternary structure, part of the 50S ribosomal subunit.

Binds to the 23S rRNA. This Granulibacter bethesdensis (strain ATCC BAA-1260 / CGDNIH1) protein is Large ribosomal subunit protein uL15.